Reading from the N-terminus, the 271-residue chain is Phosphoglycerate mutase-like protein (271 aa).

Histidine 22 (tele-phosphohistidine intermediate) is an active-site residue. The Proton donor/acceptor role is filled by glutamate 134. Residues 252 to 271 (SAETTNYPGKVPEGLDNPSG) are disordered.

It belongs to the phosphoglycerate mutase family. In terms of tissue distribution, expressed in the shoot apical meristem and meristematic zone of the root tips.

Its function is as follows. May play a role in carbohydrates metabolism. The sequence is that of Phosphoglycerate mutase-like protein from Arabidopsis thaliana (Mouse-ear cress).